We begin with the raw amino-acid sequence, 200 residues long: MKFSPLLDALIRELQVLPGVGPKSAQRMAFQLLERERKRGMQLGQTLQRALTEIGHCQHCRTFTENSLCDICANPKRAESGQLCIVETPADVAAIEQTHLYSGRYFVLMGHLSPLDGIGPKELGLDQLDNVLQGGQWKEVILATNPTIEGDATAFYIASMAKRYQINITRIAHGVPVGGELELVDGTTLSHSLSGRRPLE.

The C4-type zinc-finger motif lies at 57–72 (CQHCRTFTENSLCDIC). The Toprim domain maps to 81-176 (GQLCIVETPA…NITRIAHGVP (96 aa)).

This sequence belongs to the RecR family.

May play a role in DNA repair. It seems to be involved in an RecBC-independent recombinational process of DNA repair. It may act with RecF and RecO. The chain is Recombination protein RecR from Tolumonas auensis (strain DSM 9187 / NBRC 110442 / TA 4).